Consider the following 424-residue polypeptide: Tyrosine--tRNA ligase (424 aa).

Tyr-37 is an L-tyrosine binding site. A 'HIGH' region motif is present at residues 42–51 (PTADSLHLGH). Position 144 is an N6-acetyllysine (Lys-144). L-tyrosine contacts are provided by Tyr-175 and Gln-179. Positions 235–239 (KFGKT) match the 'KMSKS' region motif. Residue Lys-238 participates in ATP binding. Residues 357 to 414 (ADLMQALVDSELQPSRGQARKTIASNAITINGEKQSDPEYFFKEEDRLFGRFTLLRRG) enclose the S4 RNA-binding domain.

This sequence belongs to the class-I aminoacyl-tRNA synthetase family. TyrS type 1 subfamily. In terms of assembly, homodimer.

It localises to the cytoplasm. It catalyses the reaction tRNA(Tyr) + L-tyrosine + ATP = L-tyrosyl-tRNA(Tyr) + AMP + diphosphate + H(+). In terms of biological role, catalyzes the attachment of tyrosine to tRNA(Tyr) in a two-step reaction: tyrosine is first activated by ATP to form Tyr-AMP and then transferred to the acceptor end of tRNA(Tyr). This chain is Tyrosine--tRNA ligase, found in Escherichia coli (strain K12 / DH10B).